Here is a 212-residue protein sequence, read N- to C-terminus: MNSIEFPLLDQTTKNSVISTTLNDLSNWSRLSSLWPLLYGTSCCFIEFASLIGSRFDFDRYGLVPRSSPRQADLILTAGTVTMKMAPSLVRLYEQMPEPKYVIAMGACTITGGMFSTDSYSTVRGVDKLIPVDVYLPGCPPKPEAIIDAITKLRKKISREIYENQMSSQRENRCFTTNHKFHIGYSTHTGNYGQELFYQLPSTSEIPSDTFF.

Residues C43, C44, C108, and C139 each coordinate [4Fe-4S] cluster.

The protein belongs to the complex I 20 kDa subunit family. NDH is composed of at least 16 different subunits, 5 of which are encoded in the nucleus. It depends on [4Fe-4S] cluster as a cofactor.

The protein resides in the plastid. The protein localises to the chloroplast thylakoid membrane. The enzyme catalyses a plastoquinone + NADH + (n+1) H(+)(in) = a plastoquinol + NAD(+) + n H(+)(out). It carries out the reaction a plastoquinone + NADPH + (n+1) H(+)(in) = a plastoquinol + NADP(+) + n H(+)(out). Functionally, NDH shuttles electrons from NAD(P)H:plastoquinone, via FMN and iron-sulfur (Fe-S) centers, to quinones in the photosynthetic chain and possibly in a chloroplast respiratory chain. The immediate electron acceptor for the enzyme in this species is believed to be plastoquinone. Couples the redox reaction to proton translocation, and thus conserves the redox energy in a proton gradient. This is NAD(P)H-quinone oxidoreductase subunit K, chloroplastic from Glycine max (Soybean).